The primary structure comprises 364 residues: MKNILRKIIHIDMDCYFAAVEMRDFPELRGKPIAVGGRSDRRGVISTCNYEARAFGVRSAMASGYALKLCPDLILVPGRMSVYKEVSAQIRDIFARYTDLIEPLSLDEAYLDVTECKQCQGSATLIAQAIRQEIFEVTGLTASAGIAPVKFLAKVASDLNKPNGQYVITPDMISSFITTLPLTKIPGVGKVTGKKLEDIGLTTCGELQAYPKSELIERFGKFGKILIERAQGIDERAISPHRERKSVGVETTLAKDIYTLEQCHGVMPQLIQELGARMSRSAKGRSINKQVVKLKFNDFKQTTIEHRSDEMSVKLFYELLAQSLERQQGRGIRLLGVSVGLACQADSNTAKDNQVRESQLDLGF.

Residues 8 to 189 (IIHIDMDCYF…LPLTKIPGVG (182 aa)) enclose the UmuC domain. 2 residues coordinate Mg(2+): D12 and D107. E108 is a catalytic residue.

The protein belongs to the DNA polymerase type-Y family. As to quaternary structure, monomer. Mg(2+) serves as cofactor.

The protein localises to the cytoplasm. It carries out the reaction DNA(n) + a 2'-deoxyribonucleoside 5'-triphosphate = DNA(n+1) + diphosphate. Poorly processive, error-prone DNA polymerase involved in untargeted mutagenesis. Copies undamaged DNA at stalled replication forks, which arise in vivo from mismatched or misaligned primer ends. These misaligned primers can be extended by PolIV. Exhibits no 3'-5' exonuclease (proofreading) activity. May be involved in translesional synthesis, in conjunction with the beta clamp from PolIII. The protein is DNA polymerase IV of Shewanella woodyi (strain ATCC 51908 / MS32).